A 381-amino-acid chain; its full sequence is Tryptophan--tRNA ligase (381 aa).

Residues 82–90 (PSLGMHIGH) carry the 'HIGH' region motif. Residues 254-258 (KMSSS) carry the 'KMSKS' region motif.

Belongs to the class-I aminoacyl-tRNA synthetase family.

The protein localises to the cytoplasm. The enzyme catalyses tRNA(Trp) + L-tryptophan + ATP = L-tryptophyl-tRNA(Trp) + AMP + diphosphate + H(+). The polypeptide is Tryptophan--tRNA ligase (Sulfolobus acidocaldarius (strain ATCC 33909 / DSM 639 / JCM 8929 / NBRC 15157 / NCIMB 11770)).